The primary structure comprises 490 residues: Aspartyl/glutamyl-tRNA(Asn/Gln) amidotransferase subunit B (490 aa).

The protein belongs to the GatB/GatE family. GatB subfamily. In terms of assembly, heterotrimer of A, B and C subunits.

It carries out the reaction L-glutamyl-tRNA(Gln) + L-glutamine + ATP + H2O = L-glutaminyl-tRNA(Gln) + L-glutamate + ADP + phosphate + H(+). The catalysed reaction is L-aspartyl-tRNA(Asn) + L-glutamine + ATP + H2O = L-asparaginyl-tRNA(Asn) + L-glutamate + ADP + phosphate + 2 H(+). Its function is as follows. Allows the formation of correctly charged Asn-tRNA(Asn) or Gln-tRNA(Gln) through the transamidation of misacylated Asp-tRNA(Asn) or Glu-tRNA(Gln) in organisms which lack either or both of asparaginyl-tRNA or glutaminyl-tRNA synthetases. The reaction takes place in the presence of glutamine and ATP through an activated phospho-Asp-tRNA(Asn) or phospho-Glu-tRNA(Gln). The protein is Aspartyl/glutamyl-tRNA(Asn/Gln) amidotransferase subunit B of Burkholderia pseudomallei (strain 1106a).